The chain runs to 133 residues: uncharacterized protein (133 aa).

The helical transmembrane segment at 36-56 (LPMLIALACIFLLLATCLLFM) threads the bilayer. The interval 105–133 (HGRPTVPRQPLPGPEDNRSHCDYMESTKM) is disordered. A compositionally biased stretch (basic and acidic residues) spans 119 to 133 (EDNRSHCDYMESTKM).

The protein localises to the membrane. This is an uncharacterized protein from Homo sapiens (Human).